A 104-amino-acid chain; its full sequence is L-rhamnose mutarotase (104 aa).

Tyrosine 18 serves as a coordination point for substrate. Residue histidine 22 is the Proton donor of the active site. Substrate-binding positions include tyrosine 41 and 76–77; that span reads WW.

This sequence belongs to the rhamnose mutarotase family. In terms of assembly, homodimer.

The protein localises to the cytoplasm. The enzyme catalyses alpha-L-rhamnose = beta-L-rhamnose. It participates in carbohydrate metabolism; L-rhamnose metabolism. In terms of biological role, involved in the anomeric conversion of L-rhamnose. This is L-rhamnose mutarotase from Escherichia coli O7:K1 (strain IAI39 / ExPEC).